We begin with the raw amino-acid sequence, 142 residues long: COA8 family protein Y39B6A.34, mitochondrial (142 aa).

This sequence belongs to the COA8 family.

The protein localises to the mitochondrion inner membrane. In terms of biological role, may be required for cytochrome c complex (COX) assembly and function, COX being the terminal component of the mitochondrial respiratory chain. The chain is COA8 family protein Y39B6A.34, mitochondrial from Caenorhabditis elegans.